Reading from the N-terminus, the 860-residue chain is Protein argonaute-2 (860 aa).

The tract at residues 1-30 (MYSGAGPALAPPAPPPPPIQGYAFKPPPRP) is disordered. Tyr-2 is modified (3'-nitrotyrosine). Residues 9–30 (LAPPAPPPPPIQGYAFKPPPRP) show a composition bias toward pro residues. One can recognise a PAZ domain in the interval 230-349 (PVIEFVCEVL…LPLEVCNIVA (120 aa)). Residues 312-317 (YFKDRH) form an interaction with guide RNA region. Ser-388 bears the Phosphoserine mark. Residues 518 to 819 (LVVVILPGKT…VAFRARYHLV (302 aa)) enclose the Piwi domain. Positions 525-567 (GKTPVYAEVKRVGDTVLGMATQCVQMKNVQRTTPQTLSNLWLK) are interaction with guide RNA. Residues 588–591 (FQQP) are interaction with GW182 family members. Position 598 (Asp-598) interacts with a divalent metal cation. Residues 651–661 (LIQFYKSTRFK) form an interaction with GW182 family members region. Residue Asp-670 participates in a divalent metal cation binding. Pro-701 carries the 4-hydroxyproline modification. Interaction with guide RNA stretches follow at residues 710 to 711 (KR), 754 to 762 (HAGIQGTSR), and 791 to 813 (YVRC…VAFR). Residue His-808 coordinates a divalent metal cation. Phosphoserine is present on residues Ser-825, Ser-829, Ser-832, and Ser-835.

Belongs to the argonaute family. Ago subfamily. In terms of assembly, interacts with DICER1 through its Piwi domain and with TARBP2 during assembly of the RNA-induced silencing complex (RISC). Together, DICER1, AGO2 and TARBP2 constitute the trimeric RISC loading complex (RLC), or micro-RNA (miRNA) loading complex (miRLC). Within the RLC/miRLC, DICER1 and TARBP2 are required to process precursor miRNAs (pre-miRNAs) to mature miRNAs and then load them onto AGO2. AGO2 bound to the mature miRNA constitutes the minimal RISC and may subsequently dissociate from DICER1 and TARBP2. Note however that the term RISC has also been used to describe the trimeric RLC/miRLC. The formation of RISC complexes containing siRNAs rather than miRNAs appears to occur independently of DICER1. Interacts with AGO1. Also interacts with DDB1, DDX5, DDX6, DDX20, DHX30, DHX36, DDX47, DHX9, ELAVL, FXR1, GEMIN4, HNRNPF, IGF2BP1, ILF3, IMP8, MATR3, PABPC1, PRMT5, P4HA1, P4HB, RBM4, SART3, TNRC6A, TNRC6B, UPF1 and YBX1. Interacts with the P-body components DCP1A and XRN1. Associates with polysomes and messenger ribonucleoproteins (mNRPs). Interacts with RBM4; the interaction is modulated under stress-induced conditions, occurs under both cell proliferation and differentiation conditions and in an RNA- and phosphorylation-independent manner. Interacts with LIMD1, WTIP and AJUBA. Interacts with TRIM71; the interaction increases in presence of RNA. Interacts with APOBEC3G in an RNA-dependent manner. Interacts with APOBEC3A, APOBEC3C, APOBEC3F and APOBEC3H. Interacts with DICER1, TARBP2, EIF6, MOV10 and RPL7A (60S ribosome subunit); they form a large RNA-induced silencing complex (RISC). Interacts with FMR1. Interacts with ZFP36. Interacts with RC3H1; the interaction is RNA independent. Found in a complex composed of AGO2, CHD7 and ARB2A. Interacts with SND1 and SYT11. Interacts with CLNK. Interacts with GARRE1. Interacts with GRB2; this interaction is important for the formation of a ternary complex containing GRB2, AGO2 and DICER1. The cofactor is Mg(2+). Mn(2+) serves as cofactor. In terms of processing, hydroxylated. 4-hydroxylation appears to enhance protein stability but is not required for miRNA-binding or endonuclease activity. Ubiquitinated on surface-exposed lysines by a SCF-like E3 ubiquitin-protein ligase complex containing ZSWIM8 during target-directed microRNA degradation (TDMD), a process that mediates degradation of microRNAs (miRNAs). Ubiquitination by the SCF-like E3 ubiquitin-protein ligase complex containing ZSWIM8 leads to its subsequent degradation, thereby exposing miRNAs for degradation. ZSWIM8 recognizes and binds AGO2 when it is engaged with a TDMD target. Post-translationally, phosphorylation at Ser-388 by AKT3; leads to up-regulate translational repression of microRNA target and down-regulate endonucleolytic cleavage. In terms of processing, a phosphorylation cycle of C-terminal serine cluster (Ser-825-Ser-835) regulates the release of target mRNAs. Target-binding leads to phosphorylation of these residues by CSNK1A1, which reduces the affinity of AGO2 for mRNA and enables target release. The ANKRD52-PPP6C phosphatase complex dephosphorylates the residues, which primes AGO2 for binding a new target.

Its subcellular location is the cytoplasm. The protein localises to the P-body. It is found in the nucleus. It catalyses the reaction Endonucleolytic cleavage to 5'-phosphomonoester.. Its function is as follows. Required for RNA-mediated gene silencing (RNAi) by the RNA-induced silencing complex (RISC). The 'minimal RISC' appears to include AGO2 bound to a short guide RNA such as a microRNA (miRNA) or short interfering RNA (siRNA). These guide RNAs direct RISC to complementary mRNAs that are targets for RISC-mediated gene silencing. The precise mechanism of gene silencing depends on the degree of complementarity between the miRNA or siRNA and its target. Binding of RISC to a perfectly complementary mRNA generally results in silencing due to endonucleolytic cleavage of the mRNA specifically by AGO2. Binding of RISC to a partially complementary mRNA results in silencing through inhibition of translation, and this is independent of endonuclease activity. May inhibit translation initiation by binding to the 7-methylguanosine cap, thereby preventing the recruitment of the translation initiation factor eIF4-E. May also inhibit translation initiation via interaction with EIF6, which itself binds to the 60S ribosomal subunit and prevents its association with the 40S ribosomal subunit. The inhibition of translational initiation leads to the accumulation of the affected mRNA in cytoplasmic processing bodies (P-bodies), where mRNA degradation may subsequently occur. In some cases RISC-mediated translational repression is also observed for miRNAs that perfectly match the 3' untranslated region (3'-UTR). Can also up-regulate the translation of specific mRNAs under certain growth conditions. Binds to the AU element of the 3'-UTR of the TNF (TNF-alpha) mRNA and up-regulates translation under conditions of serum starvation. Also required for transcriptional gene silencing (TGS), in which short RNAs known as antigene RNAs or agRNAs direct the transcriptional repression of complementary promoter regions. The polypeptide is Protein argonaute-2 (AGO2) (Bos taurus (Bovine)).